An 839-amino-acid chain; its full sequence is Protein translocase subunit SecA (839 aa).

ATP contacts are provided by residues Q85, 103 to 107 (GEGKT), and D493. The segment covering 780–790 (QIHEQERERAS) has biased composition (basic and acidic residues). The segment at 780–839 (QIHEQERERASQRATTAAPQNIQSQQSANTDDLPKVERNEACPCGSGKKFKNCHGRKSFS) is disordered. Residues 791–809 (QRATTAAPQNIQSQQSANT) are compositionally biased toward polar residues. The Zn(2+) site is built by C821, C823, C832, and H833. The segment covering 827-839 (KKFKNCHGRKSFS) has biased composition (basic residues).

This sequence belongs to the SecA family. As to quaternary structure, monomer and homodimer. Part of the essential Sec protein translocation apparatus which comprises SecA, SecYEG and auxiliary proteins SecDF. Other proteins may also be involved. It depends on Zn(2+) as a cofactor.

Its subcellular location is the cell membrane. It is found in the cytoplasm. The enzyme catalyses ATP + H2O + cellular proteinSide 1 = ADP + phosphate + cellular proteinSide 2.. Functionally, part of the Sec protein translocase complex. Interacts with the SecYEG preprotein conducting channel. Has a central role in coupling the hydrolysis of ATP to the transfer of proteins into and across the cell membrane, serving as an ATP-driven molecular motor driving the stepwise translocation of polypeptide chains across the membrane. The sequence is that of Protein translocase subunit SecA from Streptococcus pyogenes serotype M6 (strain ATCC BAA-946 / MGAS10394).